The sequence spans 173 residues: HAM34 protein (173 aa).

Low complexity predominate over residues 22 to 89; the sequence is AAPATTPDTA…ADGTQTATAP (68 aa). The segment at 22–155 is disordered; the sequence is AAPATTPDTA…ATDTTSGASH (134 aa). Residues 95–133 show a composition bias toward polar residues; it reads TEESSASGEMTPTVGTDTSDQVSDSTAAGPSTPEGSMTG. Residues 134-155 are compositionally biased toward low complexity; that stretch reads TSTPKASDSSSSATDTTSGASH.

In terms of tissue distribution, germinating spores.

Functionally, could be a structural protein required for the infection process of B.lactucae. This chain is HAM34 protein (HAM34), found in Bremia lactucae (Lettuce downy mildew).